Consider the following 206-residue polypeptide: Small ribosomal subunit protein uS4 (206 aa).

An S4 RNA-binding domain is found at 96 to 158; sequence SRLDNVVYRM…AKKQLRIQNA (63 aa).

It belongs to the universal ribosomal protein uS4 family. As to quaternary structure, part of the 30S ribosomal subunit. Contacts protein S5. The interaction surface between S4 and S5 is involved in control of translational fidelity.

In terms of biological role, one of the primary rRNA binding proteins, it binds directly to 16S rRNA where it nucleates assembly of the body of the 30S subunit. With S5 and S12 plays an important role in translational accuracy. The polypeptide is Small ribosomal subunit protein uS4 (Francisella tularensis subsp. holarctica (strain OSU18)).